The following is a 292-amino-acid chain: uncharacterized protein (292 aa).

A helical transmembrane segment spans residues 175-197 (VLNFYFTALPYAIDGIISGIGVF).

Its subcellular location is the membrane. This is an uncharacterized protein from Methanocaldococcus jannaschii (strain ATCC 43067 / DSM 2661 / JAL-1 / JCM 10045 / NBRC 100440) (Methanococcus jannaschii).